Consider the following 180-residue polypeptide: D-lyxose ketol-isomerase (180 aa).

Lys-62 contributes to the D-fructose binding site. His-75 and His-77 together coordinate Mn(2+). Lys-86 lines the D-fructose pocket. Residues Glu-88 and His-143 each contribute to the Mn(2+) site. D-fructose contacts are provided by Glu-156, Asp-166, and Arg-175.

Belongs to the D-lyxose ketol-isomerase family. In terms of assembly, homodimer; disulfide-linked. Stabilized by a disulfide bond between the two monomers of the dimeric enzyme and increased hydrophobicity at the dimer interface. Mn(2+) is required as a cofactor.

It catalyses the reaction D-lyxose = D-xylulose. Its function is as follows. Sugar isomerase that catalyzes the reversible isomerization of D-lyxose to D-xylulose. Is highly specific for the substrate D-lyxose, showing less than 2% activity towards mannose and other substrates reported for lyxose isomerases. The protein is D-lyxose ketol-isomerase of Thermofilum sp. (strain ex4484_79).